Reading from the N-terminus, the 209-residue chain is Protein-L-isoaspartate O-methyltransferase (209 aa).

The active site involves Ser-59.

Belongs to the methyltransferase superfamily. L-isoaspartyl/D-aspartyl protein methyltransferase family.

It localises to the cytoplasm. The enzyme catalyses [protein]-L-isoaspartate + S-adenosyl-L-methionine = [protein]-L-isoaspartate alpha-methyl ester + S-adenosyl-L-homocysteine. Catalyzes the methyl esterification of L-isoaspartyl residues in peptides and proteins that result from spontaneous decomposition of normal L-aspartyl and L-asparaginyl residues. It plays a role in the repair and/or degradation of damaged proteins. This Helicobacter pylori (strain G27) protein is Protein-L-isoaspartate O-methyltransferase.